A 163-amino-acid polypeptide reads, in one-letter code: Large ribosomal subunit protein uL10 (163 aa).

Belongs to the universal ribosomal protein uL10 family. In terms of assembly, part of the ribosomal stalk of the 50S ribosomal subunit. The N-terminus interacts with L11 and the large rRNA to form the base of the stalk. The C-terminus forms an elongated spine to which L12 dimers bind in a sequential fashion forming a multimeric L10(L12)X complex.

Its function is as follows. Forms part of the ribosomal stalk, playing a central role in the interaction of the ribosome with GTP-bound translation factors. The polypeptide is Large ribosomal subunit protein uL10 (Haemophilus ducreyi (strain 35000HP / ATCC 700724)).